The primary structure comprises 372 residues: NAD(P)H-quinone oxidoreductase subunit 1 (372 aa).

Transmembrane regions (helical) follow at residues 27 to 47 (LLWI…GVLV), 97 to 117 (VLFT…WLIV), 128 to 148 (VGIG…GLLM), 166 to 186 (AAQS…IVMM), 204 to 224 (FLSW…ICAL), 266 to 286 (VLSA…PISI), 308 to 328 (SLGI…AILL), and 347 to 367 (FLLP…LAFP).

Belongs to the complex I subunit 1 family. NDH-1 is composed of at least 11 different subunits.

The protein resides in the cellular thylakoid membrane. It carries out the reaction a plastoquinone + NADH + (n+1) H(+)(in) = a plastoquinol + NAD(+) + n H(+)(out). The catalysed reaction is a plastoquinone + NADPH + (n+1) H(+)(in) = a plastoquinol + NADP(+) + n H(+)(out). In terms of biological role, NDH-1 shuttles electrons from an unknown electron donor, via FMN and iron-sulfur (Fe-S) centers, to quinones in the respiratory and/or the photosynthetic chain. The immediate electron acceptor for the enzyme in this species is believed to be plastoquinone. Couples the redox reaction to proton translocation, and thus conserves the redox energy in a proton gradient. This Prochlorococcus marinus (strain NATL2A) protein is NAD(P)H-quinone oxidoreductase subunit 1.